Here is a 296-residue protein sequence, read N- to C-terminus: Cyclin-dependent kinase 1 (296 aa).

Residues Phe5–Phe288 form the Protein kinase domain. ATP is bound by residues Ile11–Val19 and Lys34. Asp130 functions as the Proton acceptor in the catalytic mechanism.

The protein belongs to the protein kinase superfamily. CMGC Ser/Thr protein kinase family. CDC2/CDKX subfamily.

It localises to the nucleus. It carries out the reaction L-seryl-[protein] + ATP = O-phospho-L-seryl-[protein] + ADP + H(+). The catalysed reaction is L-threonyl-[protein] + ATP = O-phospho-L-threonyl-[protein] + ADP + H(+). Cyclin-dependent kinase that acts as a master regulator of the mitotic and meiotic cell cycles. This chain is Cyclin-dependent kinase 1, found in Encephalitozoon cuniculi (strain GB-M1) (Microsporidian parasite).